The sequence spans 308 residues: ATP synthase gamma chain (308 aa).

Belongs to the ATPase gamma chain family. In terms of assembly, F-type ATPases have 2 components, CF(1) - the catalytic core - and CF(0) - the membrane proton channel. CF(1) has five subunits: alpha(3), beta(3), gamma(1), delta(1), epsilon(1). CF(0) has three main subunits: a, b and c.

Its subcellular location is the cell membrane. In terms of biological role, produces ATP from ADP in the presence of a proton gradient across the membrane. The gamma chain is believed to be important in regulating ATPase activity and the flow of protons through the CF(0) complex. The chain is ATP synthase gamma chain from Lacticaseibacillus casei (strain BL23) (Lactobacillus casei).